A 267-amino-acid polypeptide reads, in one-letter code: L-aspartate dehydrogenase 2 (267 aa).

Residues Ala-123 and Asn-189 each contribute to the NAD(+) site. Residue His-219 is part of the active site.

This sequence belongs to the L-aspartate dehydrogenase family.

The catalysed reaction is L-aspartate + NADP(+) + H2O = oxaloacetate + NH4(+) + NADPH + H(+). The enzyme catalyses L-aspartate + NAD(+) + H2O = oxaloacetate + NH4(+) + NADH + H(+). Its pathway is cofactor biosynthesis; NAD(+) biosynthesis; iminoaspartate from L-aspartate (dehydrogenase route): step 1/1. Specifically catalyzes the NAD or NADP-dependent dehydrogenation of L-aspartate to iminoaspartate. The protein is L-aspartate dehydrogenase 2 of Bordetella bronchiseptica (strain ATCC BAA-588 / NCTC 13252 / RB50) (Alcaligenes bronchisepticus).